Here is a 214-residue protein sequence, read N- to C-terminus: uncharacterized protein (214 aa).

A run of 5 helical transmembrane segments spans residues 33–53 (VILF…ILVV), 104–124 (ILGI…SYVL), 132–152 (FIYL…LSAS), 153–173 (GGVL…FGTK), and 186–206 (LLIL…TITF).

Its subcellular location is the cell membrane. This is an uncharacterized protein from Methanocaldococcus jannaschii (strain ATCC 43067 / DSM 2661 / JAL-1 / JCM 10045 / NBRC 100440) (Methanococcus jannaschii).